The sequence spans 338 residues: Biotin synthase (338 aa).

The Radical SAM core domain maps to 63-290 (NGVQLSTLLS…RAKVRLSAGR (228 aa)). Residues Cys-78, Cys-82, and Cys-85 each coordinate [4Fe-4S] cluster. Residues Cys-122, Cys-153, Cys-213, and Arg-285 each coordinate [2Fe-2S] cluster.

It belongs to the radical SAM superfamily. Biotin synthase family. As to quaternary structure, homodimer. [4Fe-4S] cluster serves as cofactor. [2Fe-2S] cluster is required as a cofactor.

It catalyses the reaction (4R,5S)-dethiobiotin + (sulfur carrier)-SH + 2 reduced [2Fe-2S]-[ferredoxin] + 2 S-adenosyl-L-methionine = (sulfur carrier)-H + biotin + 2 5'-deoxyadenosine + 2 L-methionine + 2 oxidized [2Fe-2S]-[ferredoxin]. It functions in the pathway cofactor biosynthesis; biotin biosynthesis; biotin from 7,8-diaminononanoate: step 2/2. Catalyzes the conversion of dethiobiotin (DTB) to biotin by the insertion of a sulfur atom into dethiobiotin via a radical-based mechanism. This is Biotin synthase from Nitrosomonas eutropha (strain DSM 101675 / C91 / Nm57).